We begin with the raw amino-acid sequence, 476 residues long: Protein transport protein Sec61 subunit alpha (476 aa).

Over 2–33 the chain is Cytoplasmic; it reads GIKFLEFIKPFCAVLPEIQKPERKIQFREKVL. A helical transmembrane segment spans residues 34 to 53; the sequence is WTAITLFIFLVCCQIPLFGI. Residues 54–76 are Lumenal-facing; that stretch reads MSSDSADPFYWMRVILASNRGTL. Residues 77 to 96 traverse the membrane as a helical segment; that stretch reads MELGIAPIVTSGLIMQLLAG. At 97-117 the chain is on the cytoplasmic side; it reads AKIIEVGDTPKDRALFNGAQK. The helical transmembrane segment at 118–138 threads the bilayer; that stretch reads LFGMIITIGQAIVYVMTGMYG. Over 139-144 the chain is Lumenal; the sequence is DPSEMG. A helical membrane pass occupies residues 145 to 165; the sequence is AGICLLIIIQLFVAGLIVLLL. The Cytoplasmic portion of the chain corresponds to 166–172; it reads DELLQKG. Residues 173-193 form a helical membrane-spanning segment; the sequence is YGLGSGISLFIATNICETIVW. Over 194 to 240 the chain is Lumenal; sequence KAFGPTTVNTGRGTEFEGAIIALFHLLATRTDKVRALREAFYRQNLP. The chain crosses the membrane as a helical span at residues 241–261; sequence NLMNLIATVFVFAVVIYFQGF. The Cytoplasmic portion of the chain corresponds to 262–288; sequence RVDLPIKSARYRGQYNTYPIKLFYTSN. Residues 289–309 traverse the membrane as a helical segment; it reads IPIILQSALVSNLYVISQMLS. Residues 310–354 lie on the Lumenal side of the membrane; sequence TRFSGNFLVNLLGTWSDATTSGPARAYPVAGLCYYLSPPESFGSV. Residues 355–375 traverse the membrane as a helical segment; the sequence is LDDPVHAVIYIVFMLGSCAFF. Topologically, residues 376–420 are cytoplasmic; the sequence is SKTWIEVSGSSAKDVAKQLKEQQMVMRGHRETSMVHELNRYIPTA. The helical transmembrane segment at 421-441 threads the bilayer; that stretch reads AAFGGLCIGGLSVMADFLGAI. At 442–445 the chain is on the lumenal side; it reads GSGT. The chain crosses the membrane as a helical span at residues 446–462; that stretch reads GILLAVTIIYQYFEIFV. Residues 463–476 are Cytoplasmic-facing; that stretch reads KEQSEVGSMGALLF.

Belongs to the SecY/SEC61-alpha family. The SEC61 channel-forming translocon complex consists of channel-forming core components SEC61A1, SEC61B and SEC61G and different auxiliary components such as SEC62 and SEC63. The SEC61 channel associates with the multi-pass translocon (MPT) complex.

Its subcellular location is the endoplasmic reticulum membrane. Component of SEC61 channel-forming translocon complex that mediates transport of signal peptide-containing precursor polypeptides across the endoplasmic reticulum (ER). Forms a ribosome receptor and a gated pore in the ER membrane, both functions required for cotranslational translocation of nascent polypeptides. May cooperate with auxiliary protein SEC62, SEC63 and HSPA5/BiP to enable post-translational transport of small presecretory proteins. The SEC61 channel is also involved in ER membrane insertion of transmembrane proteins: it mediates membrane insertion of the first few transmembrane segments of proteins, while insertion of subsequent transmembrane regions of multi-pass membrane proteins is mediated by the multi-pass translocon (MPT) complex. This chain is Protein transport protein Sec61 subunit alpha (sec61a), found in Bovichtus variegatus (Thornfish).